We begin with the raw amino-acid sequence, 440 residues long: WAS/WASL-interacting protein family member 2 (440 aa).

A compositionally biased stretch (pro residues) spans 1–18; the sequence is MPIPPPPPPPPGPPPPPT. The segment at 1-38 is disordered; the sequence is MPIPPPPPPPPGPPPPPTFNQANTEQPKLSRDEQRNRG. Residues 36–53 enclose the WH2 domain; sequence NRGALLQDICKGTKLKKV. Position 37 is an asymmetric dimethylarginine (R37). Positions 49–52 are binds actin; the sequence is KLKK. 2 disordered regions span residues 56-386 and 419-440; these read VNDR…RDSI and RVYPSKTNRAARGAPPLPPILR. Residues 116–132 are compositionally biased toward low complexity; that stretch reads PSSRAAAPRPPGSAASG. Pro residues-rich tracts occupy residues 176-193, 225-236, 249-262, and 356-378; these read APPPPPPGRRANAPPTPL, PAPPPVKPPPSP, APPPPPYRQPPGVP, and RGKPPPPPSRTPAGPPPPPPPPL.

The protein belongs to the verprolin family. As to quaternary structure, interacts with WASL and WASP, and this interaction results in cytoplasmic relocation of these two proteins along actin filaments. Interacts with NCK2 resulting in the localization to sites of focal adhesions.

It localises to the cytoplasm. Its subcellular location is the cytoskeleton. Functionally, plays an active role in the formation of cell surface protrusions downstream of activated PDGFB receptors. Plays an important role in actin-microspike formation through cooperation with WASL. May cooperate with WASP and WASL to induce mobilization and reorganization of the actin filament system. This Mus musculus (Mouse) protein is WAS/WASL-interacting protein family member 2 (Wipf2).